A 370-amino-acid chain; its full sequence is Pyruvate dehydrogenase E1 component subunit alpha (370 aa).

Heterodimer of an alpha and a beta chain. The cofactor is thiamine diphosphate.

It catalyses the reaction N(6)-[(R)-lipoyl]-L-lysyl-[protein] + pyruvate + H(+) = N(6)-[(R)-S(8)-acetyldihydrolipoyl]-L-lysyl-[protein] + CO2. In terms of biological role, the pyruvate dehydrogenase complex catalyzes the overall conversion of pyruvate to acetyl-CoA and CO(2). It contains multiple copies of three enzymatic components: pyruvate dehydrogenase (E1), dihydrolipoamide acetyltransferase (E2) and lipoamide dehydrogenase (E3). This Staphylococcus epidermidis (strain ATCC 35984 / DSM 28319 / BCRC 17069 / CCUG 31568 / BM 3577 / RP62A) protein is Pyruvate dehydrogenase E1 component subunit alpha (pdhA).